Reading from the N-terminus, the 854-residue chain is DNA mismatch repair protein MutS (854 aa).

Residues 1 to 21 are disordered; sequence MTASDIQPTEPHTPPTPHADT. 658 to 665 serves as a coordination point for ATP; it reads GPNASGKS.

This sequence belongs to the DNA mismatch repair MutS family.

In terms of biological role, this protein is involved in the repair of mismatches in DNA. It is possible that it carries out the mismatch recognition step. This protein has a weak ATPase activity. This is DNA mismatch repair protein MutS from Trichormus variabilis (strain ATCC 29413 / PCC 7937) (Anabaena variabilis).